The chain runs to 412 residues: Multifunctional CCA protein (412 aa).

Residues Gly8 and Arg11 each coordinate ATP. Positions 8 and 11 each coordinate CTP. Positions 21 and 23 each coordinate Mg(2+). Positions 91, 137, and 140 each coordinate ATP. Arg91, Arg137, and Arg140 together coordinate CTP. One can recognise an HD domain in the interval Cys228–Leu329.

The protein belongs to the tRNA nucleotidyltransferase/poly(A) polymerase family. Bacterial CCA-adding enzyme type 1 subfamily. As to quaternary structure, monomer. Can also form homodimers and oligomers. The cofactor is Mg(2+). Ni(2+) serves as cofactor.

It carries out the reaction a tRNA precursor + 2 CTP + ATP = a tRNA with a 3' CCA end + 3 diphosphate. The enzyme catalyses a tRNA with a 3' CCA end + 2 CTP + ATP = a tRNA with a 3' CCACCA end + 3 diphosphate. Its function is as follows. Catalyzes the addition and repair of the essential 3'-terminal CCA sequence in tRNAs without using a nucleic acid template. Adds these three nucleotides in the order of C, C, and A to the tRNA nucleotide-73, using CTP and ATP as substrates and producing inorganic pyrophosphate. tRNA 3'-terminal CCA addition is required both for tRNA processing and repair. Also involved in tRNA surveillance by mediating tandem CCA addition to generate a CCACCA at the 3' terminus of unstable tRNAs. While stable tRNAs receive only 3'-terminal CCA, unstable tRNAs are marked with CCACCA and rapidly degraded. This is Multifunctional CCA protein from Acinetobacter baumannii (strain SDF).